The primary structure comprises 218 residues: Adenylate kinase (218 aa).

10-15 (GAGKGT) provides a ligand contact to ATP. Positions 30–59 (STGDMLRAAVKAGTPLGLEAKAIMDAGGLV) are NMP. AMP-binding positions include T31, R36, 57-59 (GLV), 85-88 (GFPR), and Q92. The interval 122 to 159 (GRRVHLASGRTYHVTFNPPKAAGKDDVTGEDLVQRDDD) is LID. ATP contacts are provided by residues R123 and 132 to 133 (TY). Residues R156 and R167 each coordinate AMP. Residue R203 participates in ATP binding.

The protein belongs to the adenylate kinase family. In terms of assembly, monomer.

It localises to the cytoplasm. The enzyme catalyses AMP + ATP = 2 ADP. It functions in the pathway purine metabolism; AMP biosynthesis via salvage pathway; AMP from ADP: step 1/1. Functionally, catalyzes the reversible transfer of the terminal phosphate group between ATP and AMP. Plays an important role in cellular energy homeostasis and in adenine nucleotide metabolism. The protein is Adenylate kinase of Chromobacterium violaceum (strain ATCC 12472 / DSM 30191 / JCM 1249 / CCUG 213 / NBRC 12614 / NCIMB 9131 / NCTC 9757 / MK).